Reading from the N-terminus, the 89-residue chain is Phosphocarrier protein HPr (89 aa).

Residues 1–89 (MERTVTVVPE…DILSTPEAKQ (89 aa)) enclose the HPr domain. H14 acts as the Pros-phosphohistidine intermediate in catalysis. The residue at position 47 (S47) is a Phosphoserine; by HPrK/P.

The protein belongs to the HPr family.

The protein resides in the cytoplasm. Its activity is regulated as follows. Phosphorylation on Ser-47 inhibits the phosphoryl transfer from enzyme I to HPr. In terms of biological role, general (non sugar-specific) component of the phosphoenolpyruvate-dependent sugar phosphotransferase system (sugar PTS). This major carbohydrate active-transport system catalyzes the phosphorylation of incoming sugar substrates concomitantly with their translocation across the cell membrane. The phosphoryl group from phosphoenolpyruvate (PEP) is transferred to the phosphoryl carrier protein HPr by enzyme I. Phospho-HPr then transfers it to the PTS EIIA domain. Is involved in fructose transport. The protein is Phosphocarrier protein HPr (ptsH1) of Haloferax volcanii (strain ATCC 29605 / DSM 3757 / JCM 8879 / NBRC 14742 / NCIMB 2012 / VKM B-1768 / DS2) (Halobacterium volcanii).